The sequence spans 133 residues: ATP synthase epsilon chain (133 aa).

Belongs to the ATPase epsilon chain family. F-type ATPases have 2 components, CF(1) - the catalytic core - and CF(0) - the membrane proton channel. CF(1) has five subunits: alpha(3), beta(3), gamma(1), delta(1), epsilon(1). CF(0) has three main subunits: a, b and c.

The protein resides in the cellular thylakoid membrane. Functionally, produces ATP from ADP in the presence of a proton gradient across the membrane. The sequence is that of ATP synthase epsilon chain from Prochlorococcus marinus (strain MIT 9303).